The following is a 35-amino-acid chain: Cupiennin-2b (35 aa).

Residue Gln-35 is modified to Glutamine amide.

Expressed by the venom gland.

Its subcellular location is the secreted. This chain is Cupiennin-2b, found in Cupiennius salei (American wandering spider).